The chain runs to 479 residues: Adenylate kinase 8 (479 aa).

2 adenylate kinase regions span residues 58-258 (PRVV…TYVQ) and 269-471 (PKVL…SGII). 67–72 (ASGKTT) provides a ligand contact to ATP. The interval 87 to 113 (TKENLLEREFSLLSLEAKKHYQVYKRV) is NMP 1. AMP contacts are provided by residues 140–143 (GIPE), glutamine 147, and arginine 203. Positions 177 to 206 (GKRIDPVTGEIYHTTFDWPPELEIQNRLIQ) are LID 1. Residue 278–283 (GCGKKL) coordinates ATP. Residues 298 to 327 (SCGQLLKEAMAAESSLGDLIEPFFEKRMTV) are NMP 2. AMP is bound by residues 325–327 (MTV), 354–357 (GFPR), and glutamine 361. The tract at residues 391–424 (LRRTDPVTGERFHLMYKPPPTIEVQARLLQNPKD) is LID 2. Arginine 392 is an ATP binding site.

It belongs to the adenylate kinase family. In terms of assembly, interacts with CFAP45 and CFAP52; CFAP45 and AK8 dimerization may create a cavity at the interface of the dimer that can accommodate AMP.

The protein resides in the cytoplasm. The protein localises to the cytosol. It localises to the cytoskeleton. It is found in the cilium axoneme. The catalysed reaction is AMP + ATP = 2 ADP. The enzyme catalyses a 2'-deoxyribonucleoside 5'-diphosphate + ATP = a 2'-deoxyribonucleoside 5'-triphosphate + ADP. It carries out the reaction a ribonucleoside 5'-diphosphate + ATP = a ribonucleoside 5'-triphosphate + ADP. Functionally, nucleoside monophosphate (NMP) kinase that catalyzes the reversible transfer of the terminal phosphate group between nucleoside triphosphates and monophosphates. Has highest activity toward AMP, and weaker activity toward dAMP, CMP and dCMP. Also displays broad nucleoside diphosphate kinase activity. The protein is Adenylate kinase 8 (Ak8) of Rattus norvegicus (Rat).